A 515-amino-acid polypeptide reads, in one-letter code: ATP synthase subunit alpha (515 aa).

169 to 176 (GDRQTGKT) is a binding site for ATP.

Belongs to the ATPase alpha/beta chains family. In terms of assembly, F-type ATPases have 2 components, CF(1) - the catalytic core - and CF(0) - the membrane proton channel. CF(1) has five subunits: alpha(3), beta(3), gamma(1), delta(1), epsilon(1). CF(0) has three main subunits: a(1), b(2) and c(9-12). The alpha and beta chains form an alternating ring which encloses part of the gamma chain. CF(1) is attached to CF(0) by a central stalk formed by the gamma and epsilon chains, while a peripheral stalk is formed by the delta and b chains.

The protein resides in the cell inner membrane. It catalyses the reaction ATP + H2O + 4 H(+)(in) = ADP + phosphate + 5 H(+)(out). Functionally, produces ATP from ADP in the presence of a proton gradient across the membrane. The alpha chain is a regulatory subunit. The sequence is that of ATP synthase subunit alpha from Neisseria gonorrhoeae (strain ATCC 700825 / FA 1090).